We begin with the raw amino-acid sequence, 1451 residues long: Glutamate receptor ionotropic, NMDA 2A (1451 aa).

Positions 1-20 are cleaved as a signal peptide; it reads MGMFVLLLYTFLYAGDLGHG. Residues 21–547 are Extracellular-facing; it reads AEKSFPVLNI…PSAFLEPFSA (527 aa). A glycan (N-linked (GlcNAc...) asparagine) is linked at asparagine 67. A disulfide bridge connects residues cysteine 79 and cysteine 312. Histidine 120, aspartate 258, and aspartate 274 together coordinate Zn(2+). Asparagine 332, asparagine 372, asparagine 435, and asparagine 436 each carry an N-linked (GlcNAc...) asparagine glycan. 2 disulfide bridges follow: cysteine 421–cysteine 447 and cysteine 428–cysteine 448. L-glutamate-binding residues include serine 503, threonine 505, and arginine 510. An N-linked (GlcNAc...) asparagine glycan is attached at asparagine 533. Residues 548–568 form a helical membrane-spanning segment; that stretch reads SVWVMMFVMLLLVSAMAVFIF. Residues 569–592 are Cytoplasmic-facing; that stretch reads EYFSPVGYNRNLAQGKDPHGPSFT. Residues 591-612 form a pore-forming region; the sequence is FTIGKAVWLLWGLVFNNSVPVQ. Positions 593–612 form an intramembrane region, discontinuously helical; the sequence is IGKAVWLLWGLVFNNSVPVQ. The Cytoplasmic segment spans residues 613–617; sequence NPKGT. The helical transmembrane segment at 618-637 threads the bilayer; the sequence is TSKIIVSIWAFFAVIFLASY. Residues 638-808 are Extracellular-facing; it reads TANLAAFMIQ…VMSSQLDIDN (171 aa). Asparagine 679 carries N-linked (GlcNAc...) asparagine glycosylation. 3 residues coordinate L-glutamate: serine 681, threonine 682, and aspartate 723. Residues cysteine 737 and cysteine 792 are joined by a disulfide bond. Residues 809–829 form a helical membrane-spanning segment; sequence MAGVFYMLAAAMALSLITFVW. At 830–1451 the chain is on the cytoplasmic side; that stretch reads EHLFYWKLRF…KKMPSLESDV (622 aa). A compositionally biased stretch (polar residues) spans 1011 to 1022; the sequence is TLRQTQGSVNEN. Disordered stretches follow at residues 1011-1080 and 1100-1165; these read TLRQ…VSAK and NRDK…GRLP. Composition is skewed to basic and acidic residues over residues 1055-1073, 1100-1113, and 1138-1149; these read CHID…DNLK, NRDK…DKEP, and YQDHNDNYRKTE.

The protein belongs to the glutamate-gated ion channel (TC 1.A.10.1) family. Heterotetramer. Forms heterotetrameric channels composed of two GluN1/zeta subunits (GRIN1), and two identical GluN2/epsilon subunits (GRIN2A, GRIN2B, GRIN2C or GRIN2D) or GluN3 subunits (GRIN3A or GRIN3B) (in vitro). In vivo, the subunit composition may depend on the expression levels of the different subunits.

Its subcellular location is the cell membrane. It is found in the postsynaptic cell membrane. It catalyses the reaction Ca(2+)(in) = Ca(2+)(out). The enzyme catalyses Na(+)(in) = Na(+)(out). It carries out the reaction K(+)(in) = K(+)(out). Functionally, component of N-methyl-D-aspartate (NMDA) receptors (NMDARs) that function as heterotetrameric, ligand-gated cation channels with high calcium permeability and voltage-dependent block by Mg(2+). MDARs participate in synaptic plasticity. Channel activation requires binding of the neurotransmitter L-glutamate to the GluN2 subunit, glycine binding to the GluN1 subunit, plus membrane depolarization to eliminate channel inhibition by Mg(2+). NMDARs mediate simultaneously the potasium efflux and the influx of calcium and sodium. Each GluN2 subunit confers differential attributes to channel properties, including activation, deactivation and desensitization kinetics, pH sensitivity, Ca2(+) permeability, and binding to allosteric modulators. Plays a role in dendritic branching in brain neurons and in synaptic plasticity. The sequence is that of Glutamate receptor ionotropic, NMDA 2A from Xenopus laevis (African clawed frog).